A 410-amino-acid polypeptide reads, in one-letter code: Pyruvate dehydrogenase complex protein X component, mitochondrial (410 aa).

A mitochondrion-targeting transit peptide spans 1–30 (MLSAISKVSTLKSCTRYLTKCNYHASAKLL). The Lipoyl-binding domain occupies 32–108 (VKTFSMPAMS…DVGEPIAYIA (77 aa)). N6-lipoyllysine is present on lysine 73. Residues 169–210 (TLLPSVSLLLAENNISKQKALKEIAPSGSNGRLLKGDVLAYL) form the Peripheral subunit-binding (PSBD) domain.

This sequence belongs to the 2-oxoacid dehydrogenase family. Eukaryotic pyruvate dehydrogenase (PDH) complexes are organized as a core consisting of the oligomeric dihydrolipoamide acetyl-transferase (E2), around which are arranged multiple copies of pyruvate dehydrogenase (E1), dihydrolipoamide dehydrogenase (E3) and protein X (E3BP) bound by non-covalent bonds.

The protein resides in the mitochondrion matrix. Functionally, required for anchoring dihydrolipoamide dehydrogenase (E3) to the dihydrolipoamide transacetylase (E2) core of the pyruvate dehydrogenase complexes of eukaryotes. This specific binding is essential for a functional PDH complex. The sequence is that of Pyruvate dehydrogenase complex protein X component, mitochondrial (PDX1) from Saccharomyces cerevisiae (strain ATCC 204508 / S288c) (Baker's yeast).